Here is a 298-residue protein sequence, read N- to C-terminus: 1D-myo-inositol 2-acetamido-2-deoxy-alpha-D-glucopyranoside deacetylase (298 aa).

3 residues coordinate Zn(2+): His-14, Asp-17, and His-148. A disordered region spans residues 277-298 (RGPAGPDGREHDLFAGLDGPAT).

It belongs to the MshB deacetylase family. Zn(2+) serves as cofactor.

It catalyses the reaction 1D-myo-inositol 2-acetamido-2-deoxy-alpha-D-glucopyranoside + H2O = 1D-myo-inositol 2-amino-2-deoxy-alpha-D-glucopyranoside + acetate. Catalyzes the deacetylation of 1D-myo-inositol 2-acetamido-2-deoxy-alpha-D-glucopyranoside (GlcNAc-Ins) in the mycothiol biosynthesis pathway. The protein is 1D-myo-inositol 2-acetamido-2-deoxy-alpha-D-glucopyranoside deacetylase of Nocardia farcinica (strain IFM 10152).